Reading from the N-terminus, the 369-residue chain is 3-dehydroquinate synthase (369 aa).

NAD(+)-binding positions include Asp-71–Lys-76, Gly-105–Asp-109, Thr-129–Thr-130, Lys-142, Lys-151, and Thr-169–Thr-172. Zn(2+) contacts are provided by Glu-184, His-247, and His-264.

This sequence belongs to the sugar phosphate cyclases superfamily. Dehydroquinate synthase family. Co(2+) is required as a cofactor. It depends on Zn(2+) as a cofactor. The cofactor is NAD(+).

The protein resides in the cytoplasm. It carries out the reaction 7-phospho-2-dehydro-3-deoxy-D-arabino-heptonate = 3-dehydroquinate + phosphate. The protein operates within metabolic intermediate biosynthesis; chorismate biosynthesis; chorismate from D-erythrose 4-phosphate and phosphoenolpyruvate: step 2/7. Catalyzes the conversion of 3-deoxy-D-arabino-heptulosonate 7-phosphate (DAHP) to dehydroquinate (DHQ). This Dichelobacter nodosus (strain VCS1703A) protein is 3-dehydroquinate synthase.